A 312-amino-acid chain; its full sequence is Mas-related G-protein coupled receptor member B3 (312 aa).

The Extracellular portion of the chain corresponds to Met-1–Asn-31. Residues Leu-32–Leu-52 form a helical membrane-spanning segment. Over Gly-53–Asn-67 the chain is Cytoplasmic. The chain crosses the membrane as a helical span at residues Leu-68–Cys-88. Over Lys-89–Met-106 the chain is Extracellular. A helical transmembrane segment spans residues Phe-107–Ile-127. Over Met-128–His-140 the chain is Cytoplasmic. The chain crosses the membrane as a helical span at residues Thr-141–Met-161. Topologically, residues Glu-162–Asn-180 are extracellular. A helical membrane pass occupies residues Ile-181 to Leu-201. Residues Leu-202–Thr-220 lie on the Cytoplasmic side of the membrane. The chain crosses the membrane as a helical span at residues Ile-221–Val-241. Residues Asp-242–His-259 are Extracellular-facing. Residues Ile-260 to Ser-280 form a helical membrane-spanning segment. Over Ile-281 to Pro-312 the chain is Cytoplasmic.

Belongs to the G-protein coupled receptor 1 family. Mas subfamily.

The protein resides in the membrane. Its function is as follows. Orphan receptor. Probably involved in the function of nociceptive neurons. May regulate nociceptor function and/or development, including the sensation or modulation of pain. The protein is Mas-related G-protein coupled receptor member B3 (Mrgprb3) of Mus musculus (Mouse).